The primary structure comprises 228 residues: Small ribosomal subunit protein uS2 (228 aa).

This sequence belongs to the universal ribosomal protein uS2 family.

The protein is Small ribosomal subunit protein uS2 of Blochmanniella pennsylvanica (strain BPEN).